The chain runs to 84 residues: Putative membrane protein insertion efficiency factor (84 aa).

Residues 63 to 84 form a disordered region; the sequence is WGGSGYDPVPGADPEHDRRPRG. Basic and acidic residues predominate over residues 75-84; that stretch reads DPEHDRRPRG.

It belongs to the UPF0161 family.

It localises to the cell inner membrane. In terms of biological role, could be involved in insertion of integral membrane proteins into the membrane. The protein is Putative membrane protein insertion efficiency factor of Cereibacter sphaeroides (strain ATCC 17029 / ATH 2.4.9) (Rhodobacter sphaeroides).